A 130-amino-acid chain; its full sequence is Small ribosomal subunit protein uS11 (130 aa).

This sequence belongs to the universal ribosomal protein uS11 family. In terms of assembly, part of the 30S ribosomal subunit. Interacts with proteins S7 and S18. Binds to IF-3.

In terms of biological role, located on the platform of the 30S subunit, it bridges several disparate RNA helices of the 16S rRNA. Forms part of the Shine-Dalgarno cleft in the 70S ribosome. The chain is Small ribosomal subunit protein uS11 from Campylobacter lari (strain RM2100 / D67 / ATCC BAA-1060).